The primary structure comprises 4650 residues: Nonribosomal peptide synthetase lenA (4650 aa).

The adenylation 1 stretch occupies residues 227–628 (GSILDTIRAK…DGSVIHVGRK (402 aa)). A Carrier 1 domain is found at 773–849 (PPETVLEKAL…KLAQYLRNTE (77 aa)). At S810 the chain carries O-(pantetheine 4'-phosphoryl)serine. The segment at 890-1212 (EDCYPCTALQ…CDFQSQLIFQ (323 aa)) is condensation 1. The segment at 1288–1622 (ELELNAQKEP…RKIRPGYLGR (335 aa)) is adenylation 2. In terms of domain architecture, Carrier 2 spans 1745-1822 (PPVSAAEKKW…EIAALSETRD (78 aa)). S1782 bears the O-(pantetheine 4'-phosphoryl)serine mark. Residues 1850 to 2110 (ATNLIAATVH…GEKTRPGGGA (261 aa)) form a condensation 2 region. Positions 2183–2511 (RCVHDLVHDA…RTGDLIKLRG (329 aa)) are adenylation 3. Residues 2630–2708 (APQNRLQHDI…EADVGLDHAS (79 aa)) form the Carrier 3 domain. O-(pantetheine 4'-phosphoryl)serine is present on S2667. Positions 2722–2998 (ESMARALAVI…KDARRRSPAN (277 aa)) are epimerase. The tract at residues 3128–3565 (VQDVYPCTPI…VDDSQRQQIL (438 aa)) is condensation 3. The adenylation 4 stretch occupies residues 3578–3980 (CVHHIIHQRC…FVGRKDNQIK (403 aa)). The region spanning 4114–4190 (TPSTPLEAQL…QLAAVLEEGA (77 aa)) is the Carrier 4 domain. At S4151 the chain carries O-(pantetheine 4'-phosphoryl)serine. Residues 4249 to 4648 (HMVLTFSQPV…TTTPEKLVAE (400 aa)) are condensation 4.

Belongs to the NRP synthetase family. It depends on pantetheine 4'-phosphate as a cofactor.

Its pathway is alkaloid biosynthesis. In terms of biological role, nonribosomal peptide synthetase; part of the gene cluster that mediates the biosynthesis of the ergot alkaloids lentopeptins A and B. Within the pathway, lenA catalyzes the biosynthesis of the Ala-Val-Ala peptide chain, including a cinnamic acid moiety as the starting unit. The release of the peptide from the enzyme is accomplished via a cyclization reaction catalyzed by the terminal condensation-like (Ct) domain of lenA to form the N-acyldiketopiperazine intermediate. The reaction appears to proceed through a nucleophilic attack on the carbonyl carbon by a lone electron pair of the valine amide nitrogen. The phenylalanine ammonia-lyase lenB provides the starter unit for the synthesis of the N-acyldiketopiperazine intermediate by the NRPS lenA, while the cytochrome P450 monooxygenase lenC is involved in the post-NRPS oxidative modification steps to form lentopeptins A and B. The polypeptide is Nonribosomal peptide synthetase lenA (Aspergillus lentulus).